A 760-amino-acid chain; its full sequence is MKTWLKIVFGVATSAVLALLVMCIVLRPSRVHNSEESTTRALTLKDILNGTFSYKTFFPNWISGQEYLHQSTDNNVVFYNIETGESYTILSNTTMKSVNASNYGLSPDRQFAYLESDYSKLWRYSYTATYHIYDLTNGEFIRRNELPRPIQYLCWSPVGSKLAYVYQNNIYLKQRPEDPPFQITYNGKENKIFNGIPDWVYEEEMLATKYALWWSPNGKFLAYAEFNDTEIPVIAYSYYGDEQYPRTINIPYPKAGAKNPVVRIFIIDATYPEHIGPREVPVPAMIASSDYYFSWLTWVTDDRICLQWLKRIQNVSVLSTCDFREDWQTWNCPKTQEHIEESRTGWAGGFFVSTPVFSHDTISYYKIFSDKDGYKHIHYIRDTVENAIQITSGKWEAINIFRVTQDSLFYSSNEFEGYPGRRNIYRISIGSHSPSKKCITCHLRKKRCQYYTASFSDYAKYYALVCYGPGLPISTLHDGRTDQEIKILEDNKELENALKNIQLPKEEIKKLKVDDITLWYKMILPPQFDKSKKYPLLIQVYGGPCSQSVRSIFAVSWISYLASKEGIVIALVDGRGTAFQGDKLLYAVYRKLGVYEVEDQITAVRKFIEMGFIDEKRIAIWGWSYGGYVSSLALASGTGLFKCGIAVAPVSSWEYYASIYTERFMGLPTKDDNLKHYKNSTVMARAEYFRNVDYLLIHGTADDNVHFQNSAQIAKALVNAQVDFQAMWYSDQNHGLSGLSTKHLYTHMTHFLKQCFSLSD.

Residues 1-4 (MKTW) lie on the Cytoplasmic side of the membrane. The chain crosses the membrane as a helical; Signal-anchor for type II membrane protein span at residues 5–25 (LKIVFGVATSAVLALLVMCIV). At 26–760 (LRPSRVHNSE…FLKQCFSLSD (735 aa)) the chain is on the extracellular side. Asparagine 49, asparagine 92, and asparagine 99 each carry an N-linked (GlcNAc...) asparagine glycan. Residues glutamate 203 and glutamate 204 each contribute to the substrate site. Asparagine 227 and asparagine 314 each carry an N-linked (GlcNAc...) asparagine glycan. 3 disulfides stabilise this stretch: cysteine 321-cysteine 332, cysteine 438-cysteine 441, and cysteine 448-cysteine 466. Residues 481–512 (TDQEIKILEDNKELENALKNIQLPKEEIKKLK) are a coiled coil. Serine 624 functions as the Charge relay system in the catalytic mechanism. A disulfide bridge connects residues cysteine 643 and cysteine 755. Asparagine 679 is a glycosylation site (N-linked (GlcNAc...) asparagine). Residues aspartate 702 and histidine 734 each act as charge relay system in the active site.

Belongs to the peptidase S9B family. In terms of assembly, homodimer; homodimerization is required for activity of both plasma membrane and soluble forms. The monomer is inactive. Heterodimer with DPP4. Interacts with PLAUR; the interaction occurs at the cell surface of invadopodia membranes. Interacts with ITGB1. Interacts with ITGA3. Associates with integrin alpha-3/beta-1; the association occurs in a collagen-dependent manner at the cell surface of invadopodia membranes. Post-translationally, N-glycosylated. In terms of processing, the N-terminus may be blocked.

It is found in the cell surface. It localises to the cell membrane. The protein localises to the cell projection. The protein resides in the lamellipodium membrane. Its subcellular location is the invadopodium membrane. It is found in the ruffle membrane. It localises to the membrane. The protein localises to the secreted. It carries out the reaction Release of an N-terminal dipeptide, Xaa-Yaa-|-Zaa-, from a polypeptide, preferentially when Yaa is Pro, provided Zaa is neither Pro nor hydroxyproline.. The catalysed reaction is Hydrolysis of Pro-|-Xaa &gt;&gt; Ala-|-Xaa in oligopeptides.. Gelatinase activity is inhibited by serine-protease inhibitors, such as phenylmethylsulfonyl fluoride (PMSF), 4-(2-aminoethyl)-benzenesulfonyl fluoride hydrochloride (AEBSF), 4-amidino phenylsulfonyl fluoride (APSF) and diisopropyl fluorophosphate (DFP), N-ethylmaleimide (NEM) and phenylmethylsulfonyl fluoride (PMSF). Dipeptidyl peptidase activity is inhibited by 2,2'-azino-bis(3-ethylbenzthiazoline-6-sulfonic acid), diisopropylfluorophosphate (DFP). Prolyl endopeptidase activity is inhibited by the boronic acid peptide Ac-Gly-BoroPro, Ac-Gly-Pro-chloromethyl ketone and Thr-Ser-Gly-chloromethyl ketone. Its function is as follows. Cell surface glycoprotein serine protease that participates in extracellular matrix degradation and involved in many cellular processes including tissue remodeling, fibrosis, wound healing, inflammation and tumor growth. Both plasma membrane and soluble forms exhibit post-proline cleaving endopeptidase activity, with a marked preference for Ala/Ser-Gly-Pro-Ser/Asn/Ala consensus sequences, on substrate such as alpha-2-antiplasmin SERPINF2 and SPRY2. Degrade also gelatin, heat-denatured type I collagen, but not native collagen type I and IV, vibronectin, tenascin, laminin, fibronectin, fibrin or casein. Also has dipeptidyl peptidase activity, exhibiting the ability to hydrolyze the prolyl bond two residues from the N-terminus of synthetic dipeptide substrates provided that the penultimate residue is proline, with a preference for Ala-Pro, Ile-Pro, Gly-Pro, Arg-Pro and Pro-Pro. Natural neuropeptide hormones for dipeptidyl peptidase are the neuropeptide Y (NPY), peptide YY (PYY), substance P (TAC1) and brain natriuretic peptide 32 (NPPB). The plasma membrane form, in association with either DPP4, PLAUR or integrins, is involved in the pericellular proteolysis of the extracellular matrix (ECM), and hence promotes cell adhesion, migration and invasion through the ECM. Plays a role in tissue remodeling during development and wound healing. Participates in the cell invasiveness towards the ECM in malignant melanoma cancers. Enhances tumor growth progression by increasing angiogenesis, collagen fiber degradation and apoptosis and by reducing antitumor response of the immune system. Promotes glioma cell invasion through the brain parenchyma by degrading the proteoglycan brevican. Acts as a tumor suppressor in melanocytic cells through regulation of cell proliferation and survival in a serine protease activity-independent manner. In Bos taurus (Bovine), this protein is Prolyl endopeptidase FAP.